The sequence spans 448 residues: MVNSEEIADGFEPKPVSRSYSGDSSHDRSLSDLNHAAEDLSDKLKNVGLNEVTKEQSEKMMSVSESNGGLDSNAVVTINQEEEEEEEDRDGYGYGDGWSENESENVYPVRPGAEDCSFYMRTGSCKFGSSCKFNHPLARKFQIARDNKVREKEDDGGKLGLIDCKYYFRTGGCKYGETCRFNHTIPKSGLASAPELNFLGLPLRPGEVECPYYMRNGSCKYGAECKFNHPDPTTIGGTDSPSFRGNNGVSIGTFSPKATFQASSTSWSSPRHVNGTSPFIPVMLSQTHGVTSQNPEWNGYQASVYSSERGVFSPSTTYLMNNSSAETSMLLSQYRHQMPAEEFPERPDQPECSYYMKTGDCKFKFNCKYHHPKNRLPKLPPYALNDKGLPLRPDQNICTYYSRYGICKFGPACRFDHSVQPPYSTESSQAIVEPPQVSANGNESDGWN.

Residues 1 to 106 form a disordered region; sequence MVNSEEIADG…GWSENESENV (106 aa). Basic and acidic residues predominate over residues 24–45; sequence SSHDRSLSDLNHAAEDLSDKLK. The segment covering 63–79 has biased composition (polar residues); it reads VSESNGGLDSNAVVTIN. Residues 80–89 show a composition bias toward acidic residues; sequence QEEEEEEEDR. 5 C3H1-type zinc fingers span residues 110 to 138, 158 to 186, 204 to 232, 346 to 374, and 392 to 420; these read RPGA…HPLA, KLGL…HTIP, RPGE…HPDP, RPDQ…HPKN, and RPDQ…HSVQ. The interval 424–448 is disordered; sequence STESSQAIVEPPQVSANGNESDGWN. Residues 437 to 448 show a composition bias toward polar residues; it reads VSANGNESDGWN.

It localises to the nucleus. This chain is Zinc finger CCCH domain-containing protein 43, found in Arabidopsis thaliana (Mouse-ear cress).